The sequence spans 159 residues: Large ribosomal subunit protein uL22 (159 aa).

Residues 129 to 159 form a disordered region; that stretch reads VEGQQKAKMARQKAVTSVVKAPSKTQGGVQK.

Belongs to the universal ribosomal protein uL22 family. As to quaternary structure, part of the 50S ribosomal subunit.

Functionally, this protein binds specifically to 23S rRNA; its binding is stimulated by other ribosomal proteins, e.g. L4, L17, and L20. It is important during the early stages of 50S assembly. It makes multiple contacts with different domains of the 23S rRNA in the assembled 50S subunit and ribosome. In terms of biological role, the globular domain of the protein is located near the polypeptide exit tunnel on the outside of the subunit, while an extended beta-hairpin is found that lines the wall of the exit tunnel in the center of the 70S ribosome. The protein is Large ribosomal subunit protein uL22 (rplV) of Mycoplasma pneumoniae (strain ATCC 29342 / M129 / Subtype 1) (Mycoplasmoides pneumoniae).